The primary structure comprises 454 residues: UPF0210 protein Blon_2054/BLIJ_2131 (454 aa).

It belongs to the UPF0210 family. As to quaternary structure, homodimer.

This chain is UPF0210 protein Blon_2054/BLIJ_2131, found in Bifidobacterium longum subsp. infantis (strain ATCC 15697 / DSM 20088 / JCM 1222 / NCTC 11817 / S12).